Here is a 406-residue protein sequence, read N- to C-terminus: Nodal homolog (406 aa).

A signal peptide spans 1-18; that stretch reads MAFLTAVLYLGFACISQG. Positions 19–281 are excised as a propeptide; it reads LPTWPDRVES…RVPGIRRHRR (263 aa). Residues Asn-71, Asn-136, and Asn-172 are each glycosylated (N-linked (GlcNAc...) asparagine). The disordered stretch occupies residues 195-222; sequence KERAERGSGMSNAEFIDAPGPSQQYNPH. Intrachain disulfides connect Cys-306–Cys-372, Cys-335–Cys-403, and Cys-339–Cys-405. An N-linked (GlcNAc...) asparagine glycan is attached at Asn-344.

The protein belongs to the TGF-beta family. Homodimer; disulfide-linked. Interacts with, and is inhibited by cer1 and gdf10/bmp3b. As to expression, in the first phase of expression, localized to the vegetal region of the blastula. During gastrulation (stage 10.5), this expression disappears and instead becomes localized to the dorsal marginal zone, with enrichment in the organizer. During the second phase of expression in neurulae and tailbud embryos, expression restarts firstly in two symmetric patches near the posterior end of the notochord, and then in a large asymmetrical domain in the left lateral plate mesoderm.

It localises to the secreted. Functionally, cooperation and regulatory loops of multiple nodals are essential for mesendoderm patterning in early embryos. Essential for mesoderm formation and axial patterning during embryonic development. Activates the activin-like signaling pathway to induce dorsal and ventral mesoderm in animal cap ectoderm. In addition, also dorsalizes ventral marginal zone (VMZ) tissues during gastrulation. Acts in a downstream signaling cascade via cripto and cer1 to mediate cardiogenesis in embryonic mesoderm. Directs the orientation of the left-right axis by driving the left-specific gene cascade in the left lateral plate mesoderm. In Xenopus laevis (African clawed frog), this protein is Nodal homolog.